Here is a 189-residue protein sequence, read N- to C-terminus: Protein OPG107 (189 aa).

The Intravirion segment spans residues 1–28 (MDKTTLSVNACNLEYVREKAIVGVQAAK). The chain crosses the membrane as a helical; Signal-anchor for type III membrane protein span at residues 29-49 (TSTLIFFVIILAISALLLWFQ). At 50–189 (TSDNPVFNEL…HWCSDFSNME (140 aa)) the chain is on the virion surface side.

The protein belongs to the orthopoxvirus OPG107 family. Part of a stable entry-fusion complex (EFC) which is at least composed of proteins OPG143, OPG147, OPG155, OPG86, OPG94, OPG107, OPG104, and OPG099. Formation of the viral membrane is necessary for the assembly of the complex. Contains two intramolecular disulfide bonds. They are created by the viral disulfide bond formation pathway, a poxvirus-specific pathway that operates on the cytoplasmic side of the MV membranes.

The protein localises to the virion membrane. Its subcellular location is the host endoplasmic reticulum membrane. Envelope protein part of the entry-fusion complex responsible for the virus membrane fusion with host cell membrane during virus entry. Also plays a role in cell-cell fusion (syncytium formation). In Bos taurus (Bovine), this protein is Protein OPG107 (OPG107).